Consider the following 201-residue polypeptide: CDP-diacylglycerol--serine O-phosphatidyltransferase (201 aa).

6 helical membrane passes run 19-39 (IITG…LSII), 57-77 (FGAE…PAYL), 88-108 (LISA…FGIL), 112-132 (GFIG…CQLI), 133-153 (NSYL…ISDI), and 162-182 (IFIY…PHFA).

Belongs to the CDP-alcohol phosphatidyltransferase class-I family.

The protein resides in the cell membrane. It carries out the reaction a CDP-1,2-diacyl-sn-glycerol + L-serine = a 1,2-diacyl-sn-glycero-3-phospho-L-serine + CMP + H(+). The chain is CDP-diacylglycerol--serine O-phosphatidyltransferase (pssA) from Methanocaldococcus jannaschii (strain ATCC 43067 / DSM 2661 / JAL-1 / JCM 10045 / NBRC 100440) (Methanococcus jannaschii).